A 369-amino-acid polypeptide reads, in one-letter code: Flagellar P-ring protein (369 aa).

Residues 1 to 22 (MIKLKQLIAATLLLSTAFGVHA) form the signal peptide.

It belongs to the FlgI family. In terms of assembly, the basal body constitutes a major portion of the flagellar organelle and consists of four rings (L,P,S, and M) mounted on a central rod.

The protein resides in the periplasm. It localises to the bacterial flagellum basal body. Its function is as follows. Assembles around the rod to form the L-ring and probably protects the motor/basal body from shearing forces during rotation. The polypeptide is Flagellar P-ring protein (Pseudomonas syringae pv. syringae (strain B728a)).